We begin with the raw amino-acid sequence, 273 residues long: Large ribosomal subunit protein uL2 (273 aa).

Residues 221-263 (RGTAMNPVDHPHGGGEGRNFGKHPVSPWGLKTKGKKTRRNKRT) form a disordered region. Basic residues predominate over residues 252–263 (TKGKKTRRNKRT).

This sequence belongs to the universal ribosomal protein uL2 family. In terms of assembly, part of the 50S ribosomal subunit. Forms a bridge to the 30S subunit in the 70S ribosome.

Functionally, one of the primary rRNA binding proteins. Required for association of the 30S and 50S subunits to form the 70S ribosome, for tRNA binding and peptide bond formation. It has been suggested to have peptidyltransferase activity; this is somewhat controversial. Makes several contacts with the 16S rRNA in the 70S ribosome. The chain is Large ribosomal subunit protein uL2 from Buchnera aphidicola subsp. Cinara cedri (strain Cc).